A 377-amino-acid chain; its full sequence is N-acetyldiaminopimelate deacetylase (377 aa).

Aspartate 69 is a catalytic residue. Glutamate 128 acts as the Proton acceptor in catalysis.

The protein belongs to the peptidase M20A family. N-acetyldiaminopimelate deacetylase subfamily.

It catalyses the reaction N-acetyl-(2S,6S)-2,6-diaminopimelate + H2O = (2S,6S)-2,6-diaminopimelate + acetate. It participates in amino-acid biosynthesis; L-lysine biosynthesis via DAP pathway; LL-2,6-diaminopimelate from (S)-tetrahydrodipicolinate (acetylase route): step 3/3. In terms of biological role, catalyzes the conversion of N-acetyl-diaminopimelate to diaminopimelate and acetate. This is N-acetyldiaminopimelate deacetylase from Streptococcus gordonii (strain Challis / ATCC 35105 / BCRC 15272 / CH1 / DL1 / V288).